The primary structure comprises 80 residues: U6-ctenitoxin-Pn1a (80 aa).

An N-terminal signal peptide occupies residues 1–21 (MWLKIQVFVLALALITLGIQA). Positions 22–37 (EPNSGPNNPLIQEEAR) are excised as a propeptide. Cystine bridges form between C39–C54, C46–C59, C53–C69, and C61–C67. The propeptide occupies 72–80 (TLGDLFGRR).

The protein belongs to the neurotoxin 02 (plectoxin) family. 01 (Tx3) subfamily. As to expression, expressed by the venom gland.

The protein resides in the secreted. In terms of biological role, antagonist of L-type calcium channels (Cav1/CACNA1). The chain is U6-ctenitoxin-Pn1a from Phoneutria nigriventer (Brazilian armed spider).